The following is a 591-amino-acid chain: DDB1- and CUL4-associated factor 8 (591 aa).

Residues 1–25 show a composition bias toward polar residues; that stretch reads MSNKRPNTTDGRTDLANGSLSSSPE. A disordered region spans residues 1–140; that stretch reads MSNKRPNTTD…EDWVSSETTA (140 aa). S22 and S23 each carry phosphoserine. The Nuclear export signal motif lies at 40 to 51; that stretch reads IEVEASDLSLSL. 2 stretches are compositionally biased toward basic and acidic residues: residues 66–100 and 118–131; these read RGTD…HGHS and SRDQ…RALE. S100, S123, and S124 each carry phosphoserine. WD repeat units follow at residues 185–224, 228–269, 275–315, 323–363, 379–418, 426–466, and 470–509; these read GHTG…PVLD, GHKS…CCKN, QHKG…PASK, EKKV…ENEN, ESKA…GAQY, RNNA…IIQF, and DKGG…STEL. The residue at position 198 (R198) is an Omega-N-methylarginine; by PRMT1. The tract at residues 552–591 is disordered; the sequence is HRRWREPGVGATDADSDESPSSSDTSDEEEGPDRVQCMPS.

The protein belongs to the WD repeat DCAF8 family. As to quaternary structure, interacts with DDB1, CUL4A and CUL4B. Interacts with KPNA1, KPNB1 and XPO1. As to expression, expressed in the brain.

The protein localises to the nucleus. Its subcellular location is the cytoplasm. It functions in the pathway protein modification; protein ubiquitination. May function as a substrate receptor for CUL4-DDB1 E3 ubiquitin-protein ligase complex. The chain is DDB1- and CUL4-associated factor 8 (Dcaf8) from Mus musculus (Mouse).